The primary structure comprises 199 residues: Pyrrolidone-carboxylate peptidase (199 aa).

Residues E80, C142, and H166 contribute to the active site.

It belongs to the peptidase C15 family. Homotetramer.

It is found in the cytoplasm. The enzyme catalyses Release of an N-terminal pyroglutamyl group from a polypeptide, the second amino acid generally not being Pro.. In terms of biological role, removes 5-oxoproline from various penultimate amino acid residues except L-proline. This chain is Pyrrolidone-carboxylate peptidase, found in Oceanobacillus iheyensis (strain DSM 14371 / CIP 107618 / JCM 11309 / KCTC 3954 / HTE831).